Here is a 223-residue protein sequence, read N- to C-terminus: Transcription factor bHLH75 (223 aa).

Residues 58–100 (FPNLLHGNTRRKGNKEESGSKRRRKRSEEEEAMNGDETQKPKD) form a disordered region. A bHLH domain is found at 110 to 160 (QATDSHSLAERVRREKINERLKCLQDLVPGCYKAMGMAVMLDVIIDYVRSL).

Homodimer. As to expression, expressed in leaves, stems, and flowers.

It is found in the nucleus. This Arabidopsis thaliana (Mouse-ear cress) protein is Transcription factor bHLH75 (BHLH75).